We begin with the raw amino-acid sequence, 326 residues long: Mitochondrial glycine transporter (326 aa).

Solcar repeat units follow at residues 22–106 (SKTT…LRTS), 135–216 (SANL…LKRY), and 228–312 (SSSS…LILR). The next 6 membrane-spanning stretches (helical) occupy residues 28-53 (FGAG…TRVQ), 81-107 (GTLP…RTSL), 138-163 (LATG…VRYE), 191-214 (GFGA…EQLK), 232-258 (INFV…KTRL), and 287-305 (GLGL…AWTV).

Belongs to the mitochondrial carrier (TC 2.A.29) family. SLC25A38 subfamily.

Its subcellular location is the mitochondrion inner membrane. The enzyme catalyses glycine(in) = glycine(out). Functionally, mitochondrial glycine transporter that imports glycine into the mitochondrial matrix. Plays an important role in providing glycine for the first enzymatic step in heme biosynthesis, the condensation of glycine with succinyl-CoA to produce 5-aminolevulinate (ALA) in the mitochondrial matrix. The chain is Mitochondrial glycine transporter from Emericella nidulans (strain FGSC A4 / ATCC 38163 / CBS 112.46 / NRRL 194 / M139) (Aspergillus nidulans).